The chain runs to 359 residues: Glutamate 5-kinase (359 aa).

Lys-7 serves as a coordination point for ATP. Residues Ser-47, Asp-135, and Asn-147 each coordinate substrate. 202-208 is a binding site for ATP; it reads SGGITSK. The region spanning 266–343 is the PUA domain; it reads KGSIFINEGA…DQLEDVLGYS (78 aa).

It belongs to the glutamate 5-kinase family.

The protein resides in the cytoplasm. The enzyme catalyses L-glutamate + ATP = L-glutamyl 5-phosphate + ADP. It functions in the pathway amino-acid biosynthesis; L-proline biosynthesis; L-glutamate 5-semialdehyde from L-glutamate: step 1/2. Its function is as follows. Catalyzes the transfer of a phosphate group to glutamate to form L-glutamate 5-phosphate. The chain is Glutamate 5-kinase from Kosmotoga olearia (strain ATCC BAA-1733 / DSM 21960 / TBF 19.5.1).